The primary structure comprises 776 residues: Endonuclease MutS2 (776 aa).

ATP is bound at residue 330–337 (GPNTGGKT). A Smr domain is found at 701–776 (LDLRGMRYEE…GSGATIAILK (76 aa)).

It belongs to the DNA mismatch repair MutS family. MutS2 subfamily. Homodimer. Binds to stalled ribosomes, contacting rRNA.

Its function is as follows. Endonuclease that is involved in the suppression of homologous recombination and thus may have a key role in the control of bacterial genetic diversity. Functionally, acts as a ribosome collision sensor, splitting the ribosome into its 2 subunits. Detects stalled/collided 70S ribosomes which it binds and splits by an ATP-hydrolysis driven conformational change. Acts upstream of the ribosome quality control system (RQC), a ribosome-associated complex that mediates the extraction of incompletely synthesized nascent chains from stalled ribosomes and their subsequent degradation. Probably generates substrates for RQC. The chain is Endonuclease MutS2 from Lactococcus lactis subsp. cremoris (strain MG1363).